We begin with the raw amino-acid sequence, 160 residues long: Secreted RxLR effector protein 83 (160 aa).

A signal peptide spans M1–A21. The short motif at R27 to R30 is the RxLR element. N39 and N131 each carry an N-linked (GlcNAc...) asparagine glycan.

This sequence belongs to the RxLR effector family.

It localises to the secreted. The protein localises to the host nucleus. Its subcellular location is the host cytoplasm. Functionally, secreted effector that completely suppresses the host cell death induced by cell death-inducing proteins. This chain is Secreted RxLR effector protein 83, found in Plasmopara viticola (Downy mildew of grapevine).